Here is a 96-residue protein sequence, read N- to C-terminus: UPF0235 protein YPK_0828 (96 aa).

The protein belongs to the UPF0235 family.

The sequence is that of UPF0235 protein YPK_0828 from Yersinia pseudotuberculosis serotype O:3 (strain YPIII).